Reading from the N-terminus, the 378-residue chain is Protein RecA (378 aa).

Glycine 66–threonine 73 contacts ATP. The tract at residues proline 333–serine 378 is disordered. The span at alanine 338–serine 378 shows a compositional bias: low complexity.

Belongs to the RecA family.

The protein localises to the cytoplasm. In terms of biological role, can catalyze the hydrolysis of ATP in the presence of single-stranded DNA, the ATP-dependent uptake of single-stranded DNA by duplex DNA, and the ATP-dependent hybridization of homologous single-stranded DNAs. It interacts with LexA causing its activation and leading to its autocatalytic cleavage. The sequence is that of Protein RecA from Streptomyces venezuelae (strain ATCC 10712 / CBS 650.69 / DSM 40230 / JCM 4526 / NBRC 13096 / PD 04745).